A 474-amino-acid chain; its full sequence is tRNA-2-methylthio-N(6)-dimethylallyladenosine synthase (474 aa).

The MTTase N-terminal domain maps to Gln-3 to Ala-120. 6 residues coordinate [4Fe-4S] cluster: Cys-12, Cys-49, Cys-83, Cys-157, Cys-161, and Cys-164. Positions Lys-143–Gln-375 constitute a Radical SAM core domain. Positions Arg-378–Arg-441 constitute a TRAM domain.

The protein belongs to the methylthiotransferase family. MiaB subfamily. In terms of assembly, monomer. [4Fe-4S] cluster is required as a cofactor.

It is found in the cytoplasm. The catalysed reaction is N(6)-dimethylallyladenosine(37) in tRNA + (sulfur carrier)-SH + AH2 + 2 S-adenosyl-L-methionine = 2-methylsulfanyl-N(6)-dimethylallyladenosine(37) in tRNA + (sulfur carrier)-H + 5'-deoxyadenosine + L-methionine + A + S-adenosyl-L-homocysteine + 2 H(+). Its function is as follows. Catalyzes the methylthiolation of N6-(dimethylallyl)adenosine (i(6)A), leading to the formation of 2-methylthio-N6-(dimethylallyl)adenosine (ms(2)i(6)A) at position 37 in tRNAs that read codons beginning with uridine. This Mannheimia succiniciproducens (strain KCTC 0769BP / MBEL55E) protein is tRNA-2-methylthio-N(6)-dimethylallyladenosine synthase.